Here is a 378-residue protein sequence, read N- to C-terminus: Acetylornithine deacetylase (378 aa).

Position 76 (histidine 76) interacts with Zn(2+). Aspartate 78 is an active-site residue. Position 108 (aspartate 108) interacts with Zn(2+). The active site involves glutamate 140. Zn(2+) is bound by residues glutamate 141, glutamate 165, and histidine 351.

The protein belongs to the peptidase M20A family. ArgE subfamily. Homodimer. Requires Zn(2+) as cofactor. Co(2+) is required as a cofactor. The cofactor is glutathione.

It localises to the cytoplasm. The enzyme catalyses N(2)-acetyl-L-ornithine + H2O = L-ornithine + acetate. It functions in the pathway amino-acid biosynthesis; L-arginine biosynthesis; L-ornithine from N(2)-acetyl-L-ornithine (linear): step 1/1. Functionally, catalyzes the hydrolysis of the amide bond of N(2)-acetylated L-amino acids. Cleaves the acetyl group from N-acetyl-L-ornithine to form L-ornithine, an intermediate in L-arginine biosynthesis pathway, and a branchpoint in the synthesis of polyamines. This is Acetylornithine deacetylase from Vibrio campbellii (strain ATCC BAA-1116).